The sequence spans 284 residues: Nucleotide-binding protein Pput_0988 (284 aa).

8–15 is an ATP binding site; that stretch reads GRSGSGKS. 60–63 contributes to the GTP binding site; it reads DARN.

It belongs to the RapZ-like family.

Its function is as follows. Displays ATPase and GTPase activities. The chain is Nucleotide-binding protein Pput_0988 from Pseudomonas putida (strain ATCC 700007 / DSM 6899 / JCM 31910 / BCRC 17059 / LMG 24140 / F1).